The following is a 102-amino-acid chain: Outer membrane protein assembly factor BamE (102 aa).

The first 20 residues, 1–20, serve as a signal peptide directing secretion; the sequence is MNNYIKALLIIICFSSCSIS.

The protein belongs to the BamE family. As to quaternary structure, part of the Bam complex.

It localises to the cell outer membrane. Its function is as follows. Part of the outer membrane protein assembly complex, which is involved in assembly and insertion of beta-barrel proteins into the outer membrane. This chain is Outer membrane protein assembly factor BamE, found in Buchnera aphidicola subsp. Acyrthosiphon pisum (strain APS) (Acyrthosiphon pisum symbiotic bacterium).